A 303-amino-acid chain; its full sequence is 2-dehydropantoate 2-reductase (303 aa).

NADP(+) is bound by residues 7-12, Lys78, Asn103, and Ala129; that span reads GPGSLG. Lys185 acts as the Proton donor in catalysis. Residues Lys185, Asn189, Asn193, Asn203, and 252–255 each bind substrate; that span reads NESS. Glu267 contributes to the NADP(+) binding site.

This sequence belongs to the ketopantoate reductase family.

The protein localises to the cytoplasm. The catalysed reaction is (R)-pantoate + NAD(+) = 2-dehydropantoate + NADH + H(+). The enzyme catalyses (R)-pantoate + NADP(+) = 2-dehydropantoate + NADPH + H(+). It participates in cofactor biosynthesis; coenzyme A biosynthesis. Its function is as follows. Catalyzes the NAD(P)H-dependent reduction of ketopantoate into pantoic acid. The sequence is that of 2-dehydropantoate 2-reductase from Halobacterium salinarum (strain ATCC 700922 / JCM 11081 / NRC-1) (Halobacterium halobium).